The following is a 344-amino-acid chain: Anthranilate phosphoribosyltransferase (344 aa).

5-phospho-alpha-D-ribose 1-diphosphate-binding positions include G79, 82–83 (GD), T87, 89–92 (NIST), 107–115 (KHGNRSVSS), and S119. Residue G79 coordinates anthranilate. Mg(2+) is bound at residue S91. Residue N110 coordinates anthranilate. Anthranilate is bound at residue R165. D224 and E225 together coordinate Mg(2+).

The protein belongs to the anthranilate phosphoribosyltransferase family. As to quaternary structure, homodimer. Mg(2+) is required as a cofactor.

It carries out the reaction N-(5-phospho-beta-D-ribosyl)anthranilate + diphosphate = 5-phospho-alpha-D-ribose 1-diphosphate + anthranilate. Its pathway is amino-acid biosynthesis; L-tryptophan biosynthesis; L-tryptophan from chorismate: step 2/5. In terms of biological role, catalyzes the transfer of the phosphoribosyl group of 5-phosphorylribose-1-pyrophosphate (PRPP) to anthranilate to yield N-(5'-phosphoribosyl)-anthranilate (PRA). This chain is Anthranilate phosphoribosyltransferase, found in Salinibacter ruber (strain DSM 13855 / M31).